Here is a 425-residue protein sequence, read N- to C-terminus: MKVLVMGAGVIGVTTAYYLAKAGFEVTVIDRQPGPGLETSFANAGEVSPGYSSPWAGPGVPRKAIQWILDRHGPLVVRPQIDPAMWRWVVQMLRNCTASRYALNKSRMVGIAEYSRDCLRALRADIGITYDERSQGTLQLFRKQSQLDAIGGDVEILRQYNVPFEVLDRAGCIRAEPGLAAVQNSFVGGLRLVDDETGDCHLFTQRLEAAAAALGVNFVYETTIRSIDAQGGAVAGVTTDKGRFVADRYVMALGSFSPLLLRPLGIDIPVYPVKGYSITVPIVDEPASPRSTVMDESYKVAITRLGDRIRVGGTAEIGDYQPRLRPNRRVTLDRSLTDLFPGAGDLSQATFWSGLRPMTPDGPPIIGPTRLANLHLNTGHGTLGWTMACGAARVAVDQLRSVEPEIDARALSLSRYQSGAASLGA.

Val-3–Tyr-17 lines the FAD pocket.

The protein belongs to the DadA oxidoreductase family. FAD is required as a cofactor.

It carries out the reaction a D-alpha-amino acid + A + H2O = a 2-oxocarboxylate + AH2 + NH4(+). It participates in amino-acid degradation; D-alanine degradation; NH(3) and pyruvate from D-alanine: step 1/1. Oxidative deamination of D-amino acids. This Rhodopseudomonas palustris (strain HaA2) protein is D-amino acid dehydrogenase.